A 141-amino-acid polypeptide reads, in one-letter code: uncharacterized protein (141 aa).

The chain crosses the membrane as a helical span at residues 114-134; sequence ILFTCYIQSFSLLISNFFIAI.

Its subcellular location is the membrane. This is an uncharacterized protein from Schizosaccharomyces pombe (strain 972 / ATCC 24843) (Fission yeast).